The following is a 346-amino-acid chain: Senescence-specific cysteine protease SAG12 (346 aa).

The first 25 residues, Met-1–Ser-25, serve as a signal peptide directing secretion. Asn-124 carries N-linked (GlcNAc...) asparagine glycosylation. 3 cysteine pairs are disulfide-bonded: Cys-151/Cys-192, Cys-185/Cys-225, and Cys-283/Cys-335. Cys-154 is an active-site residue. His-289 is a catalytic residue. Asn-301 is a glycosylation site (N-linked (GlcNAc...) asparagine). The active site involves Asn-310.

The protein belongs to the peptidase C1 family. Found in senescent leaves, especially in senescence-associated vacuoles- (SAVs) containing cells (e.g. mesophyll and guard cells), and in senescencing ovules of unfertilised pistils.

The protein resides in the vacuole. In terms of biological role, cysteine protease that may have a developmental senescence specific cell death function during apoptosis, heavy metal detoxification, and hypersensitive response. In Arabidopsis thaliana (Mouse-ear cress), this protein is Senescence-specific cysteine protease SAG12.